We begin with the raw amino-acid sequence, 447 residues long: Imidazolonepropionase (447 aa).

Residues histidine 85 and histidine 87 each contribute to the Fe(3+) site. Zn(2+) is bound by residues histidine 85 and histidine 87. Residues arginine 94, tyrosine 157, and histidine 190 each contribute to the 4-imidazolone-5-propanoate site. Tyrosine 157 contacts N-formimidoyl-L-glutamate. Histidine 255 is a Fe(3+) binding site. Histidine 255 contacts Zn(2+). Position 258 (glutamate 258) interacts with 4-imidazolone-5-propanoate. Aspartate 329 is a binding site for Fe(3+). Residue aspartate 329 participates in Zn(2+) binding. N-formimidoyl-L-glutamate contacts are provided by asparagine 331 and glycine 333. 4-imidazolone-5-propanoate is bound at residue serine 334.

The protein belongs to the metallo-dependent hydrolases superfamily. HutI family. It depends on Zn(2+) as a cofactor. Fe(3+) serves as cofactor.

The protein localises to the cytoplasm. It catalyses the reaction 4-imidazolone-5-propanoate + H2O = N-formimidoyl-L-glutamate. The protein operates within amino-acid degradation; L-histidine degradation into L-glutamate; N-formimidoyl-L-glutamate from L-histidine: step 3/3. Functionally, catalyzes the hydrolytic cleavage of the carbon-nitrogen bond in imidazolone-5-propanoate to yield N-formimidoyl-L-glutamate. It is the third step in the universal histidine degradation pathway. This is Imidazolonepropionase from Shouchella clausii (strain KSM-K16) (Alkalihalobacillus clausii).